Reading from the N-terminus, the 1397-residue chain is Clustered mitochondria protein homolog (1397 aa).

Residues 30–63 form a TPR 1 repeat; sequence LPSFIDQKGDLKIPSHYEETITDLKLTLTVIPKT. Disordered regions lie at residues 158–203 and 526–555; these read TARG…LSRE and DAAP…DEEE. Residues 161-203 are compositionally biased toward basic and acidic residues; sequence GEAEKSDTNEEEQEQGKGKVGKPNEKESGETKETDSQPELSRE. The Clu domain occupies 368 to 640; sequence DSSRSQLMLI…RTTPRDIEFI (273 aa). One copy of the TPR 2 repeat lies at 559–595; sequence EKVLYGLSSDSQKILEDKSFEKPLKLLSEVFHLKPHG. Basic and acidic residues-rich tracts occupy residues 686–703, 812–831, 839–860, and 1019–1033; these read EGKL…EEKS, EKVE…KERA, SDDK…NTES, and QREQ…NVEK. Disordered regions lie at residues 686–707, 812–869, and 1019–1050; these read EGKL…QIAL, EKVE…EEQP, and QREQ…PIEN. A compositionally biased stretch (basic residues) spans 1034–1043; sequence KHSKKSKKKS. TPR repeat units follow at residues 1167–1200 and 1209–1242; these read IAAY…WTST and VNLL…CSHL. 2 stretches are compositionally biased toward polar residues: residues 1314 to 1338 and 1362 to 1373; these read AQSK…SQAS and PQSDPQIANQSV. The tract at residues 1314 to 1397 is disordered; that stretch reads AQSKKSPPPT…AKSKSKHTKA (84 aa). Basic and acidic residues predominate over residues 1375–1384; it reads DILKFIEGKS. The span at 1386 to 1397 shows a compositional bias: basic residues; the sequence is PNAKSKSKHTKA.

The protein belongs to the CLU family. In terms of assembly, may associate with the eukaryotic translation initiation factor 3 (eIF-3) complex.

The protein resides in the cytoplasm. MRNA-binding protein involved in proper cytoplasmic distribution of mitochondria. The protein is Clustered mitochondria protein homolog of Lodderomyces elongisporus (strain ATCC 11503 / CBS 2605 / JCM 1781 / NBRC 1676 / NRRL YB-4239) (Yeast).